A 760-amino-acid chain; its full sequence is Transmembrane channel-like protein 1 (760 aa).

Residues 1–80 (MSPKKVQIKV…RRRRLKRGAE (80 aa)) are disordered. Residues 1–182 (MSPKKVQIKV…KIKAIESQFG (182 aa)) are Cytoplasmic-facing. The span at 13–29 (KEDETEESSSEEEEEVE) shows a compositional bias: acidic residues. Residues 30 to 39 (DKLPRRESLR) are compositionally biased toward basic and acidic residues. Serine 37 bears the Phosphoserine mark. Threonine 45 is subject to Phosphothreonine. The span at 50 to 61 (NEDDPEPEPEDE) shows a compositional bias: acidic residues. Phosphoserine is present on serine 128. A helical membrane pass occupies residues 183 to 220 (SSVASYFLFLRWMYGVNMVLFILTFSLIMLPEYLWGLP). At 221-271 (YGSLPRKTVPRAEEASAANFGVLYDFNGLAQYSVLFYGYYDNKRTIGWMNF) the chain is on the extracellular side. The helical transmembrane segment at 272-303 (RLPLSYFLVGIMCIGYSFLVVLKAMTKNIGDD) threads the bilayer. Topologically, residues 304-359 (GGGDDNTFNFSWKVFTSWDYLIGNPETADNKFNSITMNFKEAITEEKAAQVEENVH) are cytoplasmic. Serine 314 carries the phosphoserine modification. The chain crosses the membrane as a helical span at residues 360-390 (LIRFLRFLANFFVFLTLGGSGYLIFWAVKRS). The Extracellular portion of the chain corresponds to 391-402 (QEFAQQDPDTLG). Phosphothreonine is present on threonine 400. Residues 403–430 (WWEKNEMNMVMSLLGMFCPTLFDLFAEL) traverse the membrane as a helical segment. Over 431 to 434 (EDYH) the chain is Cytoplasmic. A helical transmembrane segment spans residues 435–469 (PLIALKWLLGRIFALLLGNLYVFILALMDEINNKI). Residues 470-515 (EEEKLVKANITLWEANMIKAYNASFSENSTGPPFFVHPADVPRGPC) lie on the Extracellular side of the membrane. The chain crosses the membrane as a helical span at residues 516–553 (WETMVGQEFVRLTVSDVLTTYVTILIGDFLRACFVRFC). Over 554–572 (NYCWCWDLEYGYPSYTEFD) the chain is Cytoplasmic. Residues 573-593 (ISGNVLALIFNQGMIWMGSFF) traverse the membrane as a helical segment. At 594 to 596 (APS) the chain is on the extracellular side. The helical transmembrane segment at 597-619 (LPGINILRLHTSMYFQCWAVMCC) threads the bilayer. At 620 to 633 (NVPEARVFKASRSN) the chain is on the cytoplasmic side. A helical membrane pass occupies residues 634–657 (NFYLGMLLLILFLSTMPVLYMIVS). Residues 658 to 700 (LPPSFDCGPFSGKNRMFEVIGETLEHDFPSWMAKILRQLSNPG) lie on the Extracellular side of the membrane. Residues 701–734 (LVIAVILVMVLAIYYLNATAKGQKAANLDLKKKM) form a helical membrane-spanning segment. Residues 735-760 (KMQALENKMRNKKMAAARAAAAAGRQ) lie on the Cytoplasmic side of the membrane.

It belongs to the TMC family. In terms of assembly, forms the MET channel complosed of TMC dimer (TMC1 or TMC2), TMIE, TOMT, CIB (CIB2 or CIB3), LHFPL5 and PDH15. The interaction of TMC1 and TMC2 with TOMT is required for the transportation of TMC1/2 into the stereocilia of hair cells. Interacts (via N-terminus) with both isoforms CD1 and CD3 of PCDH15. Can form a heterodimer with TMC2, TMC5 or TMC7. As to expression, detected in fetal cochlea, and at low levels in placenta and testis.

It is found in the cell membrane. The enzyme catalyses Ca(2+)(in) = Ca(2+)(out). Functionally, pore-forming subunit of the mechanotransducer (MET) non-selective cation channel complex located at the tips of stereocilia of cochlear hair cells and that mediates sensory transduction in the auditory system. The MET complex is composed of two dimeric pore-forming ion-conducting transmembrane TMC (TMC1 or TMC2) subunits, and aided by several auxiliary proteins including LHFPL5, TMIE, CIB2/3 and TOMT, and the tip-link PCDH15. MET channel is activated by tension in the tip-link extending from the side wall of one stereocilium to the tip of the adjacent shorter stereocilium, where the channel is located. TMC1 MET channel is highly permeable to calcium and likely transports monovalent cations. Also involved in vestibular hair cells transduction current. In Homo sapiens (Human), this protein is Transmembrane channel-like protein 1.